A 263-amino-acid chain; its full sequence is Ribosomal RNA large subunit methyltransferase E (263 aa).

Residues Gly48, Trp50, Asp68, Asp88, and Asp118 each contribute to the S-adenosyl-L-methionine site. Lys158 (proton acceptor) is an active-site residue. In terms of domain architecture, TRAM spans 205-263 (PVREGDIVEATIEDIGEEGDGIAKVENFTVFVSGVEDGETVEVRIDDVKPRYAFAEPVE).

It belongs to the class I-like SAM-binding methyltransferase superfamily. RNA methyltransferase RlmE family.

It is found in the cytoplasm. It catalyses the reaction uridine(2552) in 23S rRNA + S-adenosyl-L-methionine = 2'-O-methyluridine(2552) in 23S rRNA + S-adenosyl-L-homocysteine + H(+). Specifically methylates the uridine in position 2552 of 23S rRNA at the 2'-O position of the ribose in the fully assembled 50S ribosomal subunit. The chain is Ribosomal RNA large subunit methyltransferase E from Haloarcula marismortui (strain ATCC 43049 / DSM 3752 / JCM 8966 / VKM B-1809) (Halobacterium marismortui).